The following is a 204-amino-acid chain: Altered inheritance of mitochondria protein 20 (204 aa).

The helical transmembrane segment at 6–26 (VAVGTAVGIPIAVGVIIALIF) threads the bilayer.

This sequence belongs to the SKG1 family.

It localises to the vacuole membrane. Involved in cell cycle progression and surviving DNA damage. The protein is Altered inheritance of mitochondria protein 20 (AIM20) of Saccharomyces cerevisiae (strain RM11-1a) (Baker's yeast).